Reading from the N-terminus, the 622-residue chain is 1,4-alpha-glucan branching enzyme GlgB (622 aa).

Asp300 (nucleophile) is an active-site residue. Catalysis depends on Glu351, which acts as the Proton donor.

Belongs to the glycosyl hydrolase 13 family. GlgB subfamily. In terms of assembly, monomer.

The catalysed reaction is Transfers a segment of a (1-&gt;4)-alpha-D-glucan chain to a primary hydroxy group in a similar glucan chain.. It participates in glycan biosynthesis; glycogen biosynthesis. In terms of biological role, catalyzes the formation of the alpha-1,6-glucosidic linkages in glycogen by scission of a 1,4-alpha-linked oligosaccharide from growing alpha-1,4-glucan chains and the subsequent attachment of the oligosaccharide to the alpha-1,6 position. In Streptococcus agalactiae serotype III (strain NEM316), this protein is 1,4-alpha-glucan branching enzyme GlgB.